A 155-amino-acid polypeptide reads, in one-letter code: Protein FAM162A (155 aa).

Positions 77-103 are required for proapoptotic activity; sequence RFKKEEEIPETISFEMLDAAKNKLRVK. The helical transmembrane segment at 104–121 threads the bilayer; that stretch reads VSYLMIALTVAGCIYMVI.

This sequence belongs to the UPF0389 family. Interacts with HSP90AB1; HSP90AB1 is essential for FAM162A mitochondrial localization and pro-apoptotic activity. Interacts with VDAC2; the interaction is probably involved in inducing mitochondrial permeability transition.

Its subcellular location is the mitochondrion membrane. Functionally, proposed to be involved in regulation of apoptosis; the exact mechanism may differ between cell types/tissues. May be involved in hypoxia-induced cell death of transformed cells implicating cytochrome C release and caspase activation (such as CASP9) and inducing mitochondrial permeability transition. May be involved in hypoxia-induced cell death of neuronal cells probably by promoting release of AIFM1 from mitochondria to cytoplasm and its translocation to the nucleus; however, the involvement of caspases has been reported conflictingly. The chain is Protein FAM162A (Fam162a) from Mus musculus (Mouse).